Consider the following 328-residue polypeptide: Phosphate acyltransferase (328 aa).

Belongs to the PlsX family. In terms of assembly, homodimer. Probably interacts with PlsY.

It localises to the cytoplasm. The catalysed reaction is a fatty acyl-[ACP] + phosphate = an acyl phosphate + holo-[ACP]. Its pathway is lipid metabolism; phospholipid metabolism. In terms of biological role, catalyzes the reversible formation of acyl-phosphate (acyl-PO(4)) from acyl-[acyl-carrier-protein] (acyl-ACP). This enzyme utilizes acyl-ACP as fatty acyl donor, but not acyl-CoA. This Geobacillus thermodenitrificans (strain NG80-2) protein is Phosphate acyltransferase.